Here is a 131-residue protein sequence, read N- to C-terminus: Peptide methionine sulfoxide reductase MsrB (131 aa).

One can recognise a MsrB domain in the interval 8 to 130 (LEEWKEMLDP…NSVCLDLVPR (123 aa)). The Zn(2+) site is built by Cys47, Cys50, Cys96, and Cys99. Cys119 serves as the catalytic Nucleophile.

Belongs to the MsrB Met sulfoxide reductase family. Zn(2+) serves as cofactor.

The enzyme catalyses L-methionyl-[protein] + [thioredoxin]-disulfide + H2O = L-methionyl-(R)-S-oxide-[protein] + [thioredoxin]-dithiol. The chain is Peptide methionine sulfoxide reductase MsrB from Pseudomonas savastanoi pv. phaseolicola (strain 1448A / Race 6) (Pseudomonas syringae pv. phaseolicola (strain 1448A / Race 6)).